A 609-amino-acid chain; its full sequence is GDP-Man:Man(3)GlcNAc(2)-PP-Dol alpha-1,2-mannosyltransferase (609 aa).

A topological domain (lumenal) is located at residue Met-1. A helical transmembrane segment spans residues Tyr-2–Leu-22. The Cytoplasmic portion of the chain corresponds to Pro-23–His-195. Positions Phe-196–Leu-216 form an intramembrane region, helical. Over Ser-217–His-455 the chain is Cytoplasmic. Residues Phe-456–Ala-476 constitute an intramembrane region (helical). Residues Gly-477–Tyr-609 are Cytoplasmic-facing.

The protein belongs to the glycosyltransferase group 1 family.

The protein resides in the endoplasmic reticulum membrane. It carries out the reaction an alpha-D-Man-(1-&gt;3)-[alpha-D-Man-(1-&gt;6)]-beta-D-Man-(1-&gt;4)-beta-D-GlcNAc-(1-&gt;4)-alpha-D-GlcNAc-diphospho-di-trans,poly-cis-dolichol + 2 GDP-alpha-D-mannose = an alpha-D-Man-(1-&gt;2)-alpha-D-Man-(1-&gt;2)-alpha-D-Man-(1-&gt;3)-[alpha-D-Man-(1-&gt;6)]-beta-D-Man-(1-&gt;4)-beta-D-GlcNAc-(1-&gt;4)-alpha-D-GlcNAc-diphospho-di-trans,poly-cis-dolichol + 2 GDP + 2 H(+). It functions in the pathway protein modification; protein glycosylation. Its function is as follows. GDP-Man:Man(3)GlcNAc(2)-PP-Dol alpha-1,2-mannosyltransferase that operates in the biosynthetic pathway of dolichol-linked oligosaccharides, the glycan precursors employed in protein asparagine (N)-glycosylation. The assembly of dolichol-linked oligosaccharides begins on the cytosolic side of the endoplasmic reticulum membrane and finishes in its lumen. The sequential addition of sugars to dolichol pyrophosphate produces dolichol-linked oligosaccharides containing fourteen sugars, including two GlcNAcs, nine mannoses and three glucoses. Once assembled, the oligosaccharide is transferred from the lipid to nascent proteins by oligosaccharyltransferases. Catalyzes, on the cytoplasmic face of the endoplasmic reticulum, the addition of the fourth and fifth mannose residues to the dolichol-linked oligosaccharide chain, to produce Man(5)GlcNAc(2)-PP-dolichol core oligosaccharide. The sequence is that of GDP-Man:Man(3)GlcNAc(2)-PP-Dol alpha-1,2-mannosyltransferase (ALG11) from Candida albicans (strain SC5314 / ATCC MYA-2876) (Yeast).